Consider the following 181-residue polypeptide: Keratin-associated protein 4-5 (181 aa).

26 repeat units span residues 5 to 9, 20 to 24, 25 to 29, 30 to 34, 35 to 39, 40 to 44, 45 to 49, 55 to 59, 60 to 64, 65 to 69, 70 to 74, 75 to 79, 80 to 84, 85 to 89, 90 to 94, 95 to 99, 100 to 104, 105 to 109, 110 to 114, 115 to 119, 120 to 124, 125 to 129, 130 to 134, 135 to 139, 140 to 144, and 145 to 149. Positions 5-154 are 26 X 5 AA repeats of C-C-[GRQVCHIEK]-[SPTR]-[VSTQYC]; sequence CCGSVSSEQS…CCVRPVCGRV (150 aa).

Belongs to the KRTAP type 4 family. Interacts with hair keratins. In terms of tissue distribution, expressed in the hair follicles.

In the hair cortex, hair keratin intermediate filaments are embedded in an interfilamentous matrix, consisting of hair keratin-associated proteins (KRTAP), which are essential for the formation of a rigid and resistant hair shaft through their extensive disulfide bond cross-linking with abundant cysteine residues of hair keratins. The matrix proteins include the high-sulfur and high-glycine-tyrosine keratins. The sequence is that of Keratin-associated protein 4-5 (KRTAP4-5) from Homo sapiens (Human).